We begin with the raw amino-acid sequence, 561 residues long: Potassium-transporting ATPase potassium-binding subunit (561 aa).

A run of 12 helical transmembrane segments spans residues 2–22 (GQGL…TPVL), 66–86 (IRAI…LIYF), 135–155 (ALGF…IAFI), 177–197 (ILLP…VPQT), 253–273 (LIET…YGVF), 280–300 (AWLL…VAAG), 327–347 (FGWA…CGAV), 354–374 (LMPQ…IWGG), 378–398 (GTAY…LMVG), 413–433 (IVLA…PSAI), 482–502 (LSTS…MLLL), and 531–551 (AGIV…LGPI).

It belongs to the KdpA family. In terms of assembly, the system is composed of three essential subunits: KdpA, KdpB and KdpC.

It localises to the cell inner membrane. Functionally, part of the high-affinity ATP-driven potassium transport (or Kdp) system, which catalyzes the hydrolysis of ATP coupled with the electrogenic transport of potassium into the cytoplasm. This subunit binds the periplasmic potassium ions and delivers the ions to the membrane domain of KdpB through an intramembrane tunnel. This chain is Potassium-transporting ATPase potassium-binding subunit, found in Nostoc sp. (strain PCC 7120 / SAG 25.82 / UTEX 2576).